Here is a 145-residue protein sequence, read N- to C-terminus: D-aminoacyl-tRNA deacylase (145 aa).

Residues 137–138 (GP) carry the Gly-cisPro motif, important for rejection of L-amino acids motif.

It belongs to the DTD family. In terms of assembly, homodimer.

The protein localises to the cytoplasm. The enzyme catalyses glycyl-tRNA(Ala) + H2O = tRNA(Ala) + glycine + H(+). It carries out the reaction a D-aminoacyl-tRNA + H2O = a tRNA + a D-alpha-amino acid + H(+). An aminoacyl-tRNA editing enzyme that deacylates mischarged D-aminoacyl-tRNAs. Also deacylates mischarged glycyl-tRNA(Ala), protecting cells against glycine mischarging by AlaRS. Acts via tRNA-based rather than protein-based catalysis; rejects L-amino acids rather than detecting D-amino acids in the active site. By recycling D-aminoacyl-tRNA to D-amino acids and free tRNA molecules, this enzyme counteracts the toxicity associated with the formation of D-aminoacyl-tRNA entities in vivo and helps enforce protein L-homochirality. This is D-aminoacyl-tRNA deacylase from Yersinia enterocolitica serotype O:8 / biotype 1B (strain NCTC 13174 / 8081).